Here is a 959-residue protein sequence, read N- to C-terminus: Isoleucine--tRNA ligase (959 aa).

The 'HIGH' region signature appears at Pro-66–His-76. Glu-592 lines the L-isoleucyl-5'-AMP pocket. Residues Lys-633 to Ser-637 carry the 'KMSKS' region motif. Residue Lys-636 participates in ATP binding. Zn(2+) contacts are provided by Cys-922, Cys-925, Cys-942, and Cys-945.

It belongs to the class-I aminoacyl-tRNA synthetase family. IleS type 1 subfamily. As to quaternary structure, monomer. Requires Zn(2+) as cofactor.

It localises to the cytoplasm. The catalysed reaction is tRNA(Ile) + L-isoleucine + ATP = L-isoleucyl-tRNA(Ile) + AMP + diphosphate. In terms of biological role, catalyzes the attachment of isoleucine to tRNA(Ile). As IleRS can inadvertently accommodate and process structurally similar amino acids such as valine, to avoid such errors it has two additional distinct tRNA(Ile)-dependent editing activities. One activity is designated as 'pretransfer' editing and involves the hydrolysis of activated Val-AMP. The other activity is designated 'posttransfer' editing and involves deacylation of mischarged Val-tRNA(Ile). This is Isoleucine--tRNA ligase from Cupriavidus metallidurans (strain ATCC 43123 / DSM 2839 / NBRC 102507 / CH34) (Ralstonia metallidurans).